A 352-amino-acid chain; its full sequence is N-acetyl-gamma-glutamyl-phosphate reductase (352 aa).

Residue Cys155 is part of the active site.

Belongs to the NAGSA dehydrogenase family. Type 1 subfamily.

The protein resides in the cytoplasm. The enzyme catalyses N-acetyl-L-glutamate 5-semialdehyde + phosphate + NADP(+) = N-acetyl-L-glutamyl 5-phosphate + NADPH + H(+). It participates in amino-acid biosynthesis; L-arginine biosynthesis; N(2)-acetyl-L-ornithine from L-glutamate: step 3/4. In terms of biological role, catalyzes the NADPH-dependent reduction of N-acetyl-5-glutamyl phosphate to yield N-acetyl-L-glutamate 5-semialdehyde. This Acaryochloris marina (strain MBIC 11017) protein is N-acetyl-gamma-glutamyl-phosphate reductase.